The chain runs to 623 residues: Leucine aminopeptidase 2 (623 aa).

Residues 136 to 138 (QCQ) and 273 to 278 (PYGGME) each bind a peptide. H302 serves as a coordination point for Zn(2+). E303 serves as the catalytic Proton acceptor. Residues H306 and E325 each coordinate Zn(2+). Y390 acts as the Proton donor in catalysis.

This sequence belongs to the peptidase M1 family. Zn(2+) serves as cofactor.

The protein resides in the cytoplasm. The protein localises to the nucleus. It catalyses the reaction an epoxide + H2O = an ethanediol. Its function is as follows. Aminopeptidase that preferentially cleaves di- and tripeptides. Also has low epoxide hydrolase activity (in vitro). Can hydrolyze the epoxide leukotriene LTA(4) but it forms preferentially 5,6-dihydroxy-7,9,11,14-eicosatetraenoic acid rather than the cytokine leukotriene B(4) as the product compared to the homologous mammalian enzyme (in vitro). The sequence is that of Leucine aminopeptidase 2 from Phaeosphaeria nodorum (strain SN15 / ATCC MYA-4574 / FGSC 10173) (Glume blotch fungus).